A 950-amino-acid chain; its full sequence is Valine--tRNA ligase, mitochondrial (950 aa).

The N-terminal 90 residues, 1 to 90, are a transit peptide targeting the mitochondrion; sequence MFHFQRSFSS…ITIQDALARF (90 aa). The 'HIGH' region motif lies at 67 to 77; the sequence is PNITGKLHIGH. The 'KMSKS' region motif lies at 556 to 560; that stretch reads KMSKS. K559 contributes to the ATP binding site.

This sequence belongs to the class-I aminoacyl-tRNA synthetase family.

It localises to the mitochondrion. The enzyme catalyses tRNA(Val) + L-valine + ATP = L-valyl-tRNA(Val) + AMP + diphosphate. This Schizosaccharomyces pombe (strain 972 / ATCC 24843) (Fission yeast) protein is Valine--tRNA ligase, mitochondrial (vas1).